A 190-amino-acid chain; its full sequence is ATP synthase subunit b (190 aa).

A helical membrane pass occupies residues 4–24 (ILAPVLSLVLIAGVASPALAA).

It belongs to the ATPase B chain family. In terms of assembly, F-type ATPases have 2 components, F(1) - the catalytic core - and F(0) - the membrane proton channel. F(1) has five subunits: alpha(3), beta(3), gamma(1), delta(1), epsilon(1). F(0) has three main subunits: a(1), b(2) and c(10-14). The alpha and beta chains form an alternating ring which encloses part of the gamma chain. F(1) is attached to F(0) by a central stalk formed by the gamma and epsilon chains, while a peripheral stalk is formed by the delta and b chains.

It localises to the cell inner membrane. F(1)F(0) ATP synthase produces ATP from ADP in the presence of a proton or sodium gradient. F-type ATPases consist of two structural domains, F(1) containing the extramembraneous catalytic core and F(0) containing the membrane proton channel, linked together by a central stalk and a peripheral stalk. During catalysis, ATP synthesis in the catalytic domain of F(1) is coupled via a rotary mechanism of the central stalk subunits to proton translocation. Functionally, component of the F(0) channel, it forms part of the peripheral stalk, linking F(1) to F(0). The chain is ATP synthase subunit b from Ruegeria pomeroyi (strain ATCC 700808 / DSM 15171 / DSS-3) (Silicibacter pomeroyi).